A 130-amino-acid polypeptide reads, in one-letter code: Small ribosomal subunit protein uS9 (130 aa).

This sequence belongs to the universal ribosomal protein uS9 family.

This chain is Small ribosomal subunit protein uS9, found in Streptococcus gordonii (strain Challis / ATCC 35105 / BCRC 15272 / CH1 / DL1 / V288).